The following is a 28-amino-acid chain: Potassium channel toxin alpha-KTx 13.2 (28 aa).

Cystine bridges form between Cys-2–Cys-19, Cys-6–Cys-24, and Cys-10–Cys-26. The interval 17–24 (IKCINGSC) is interaction with Ca(2+)-activated K(+) channels.

This sequence belongs to the short scorpion toxin superfamily. Potassium channel inhibitor family. Alpha-KTx 13 subfamily. In terms of tissue distribution, expressed by the venom gland.

It is found in the secreted. In terms of biological role, potent and selective inhibitor of Kv1.2/KCNA2 potassium channels. This Orthochirus scrobiculosus (Central Asian scorpion) protein is Potassium channel toxin alpha-KTx 13.2.